Here is a 480-residue protein sequence, read N- to C-terminus: Immune evasion protein OPG047 (480 aa).

Residues 10 to 90 (CKNILALSMT…SYTGKVYIDS (81 aa)) form the BTB domain. The 99-residue stretch at 125–223 (CVECYMMGIE…NYLSPRGINN (99 aa)) folds into the BACK domain. Kelch repeat units lie at residues 273–319 (VVYL…PANN), 320–363 (KLYV…SINN), 365–408 (IYVM…VFGR), 410–447 (LFLV…IVDN), and 448–480 (KLLL…WDGK).

This sequence belongs to the orthopoxvirus OPG047 family.

Functionally, might have a role in the suppression of host immune response. The polypeptide is Immune evasion protein OPG047 (OPG047) (Vaccinia virus (strain Western Reserve) (VACV)).